The following is a 145-amino-acid chain: Angiogenin (145 aa).

Positions 1–24 (MAISPGPLFLIFVLGLVVIPPTLA) are cleaved as a signal peptide. The residue at position 25 (Gln25) is a Pyrrolidone carboxylic acid. The Proton acceptor role is filled by His37. 2 residues coordinate tRNA: Arg45 and Asp46. Disulfide bonds link Cys50-Cys104, Cys63-Cys115, and Cys81-Cys130. Residues 55 to 59 (KRRSL) carry the Nucleolar localization signal motif. 2 residues coordinate tRNA: Cys104 and Val126. His137 functions as the Proton donor in the catalytic mechanism.

It belongs to the pancreatic ribonuclease family. Homodimer. Interacts with RNH1; inhibiting ANG ribonuclease activity. Interacts with PCNA.

It is found in the secreted. Its subcellular location is the nucleus. The protein resides in the nucleolus. The protein localises to the cytoplasm. It localises to the stress granule. Has weak tRNA ribonuclease activity by itself due to partial autoinhibition by its C-terminus (residues 139-145), which folds into a short alpha-helix that partially occludes the substrate-binding site. In absence of stress, the ribonuclease activity is inhibited by RNH1 in the cytoplasm. In response to stress, dissociates from RNH1 in the cytoplasm and associates with cytoplasmic ribosomes with vacant A-sites: ribosomes directly activate the tRNA ribonuclease activity of ANG by refolding the C-terminal alpha-helix. In response to stress, the angiogenic activity of ANG is inhibited by RNH1 in the nucleus. In terms of biological role, secreted ribonuclease that can either promote or restrict cell proliferation of target cells, depending on the context. Endocytosed in target cells via its receptor PLXNB2 and translocates to the cytoplasm or nucleus. Under stress conditions, localizes to the cytoplasm and promotes the assembly of stress granules (SGs): specifically cleaves a subset of tRNAs within anticodon loops to produce tRNA-derived stress-induced fragments (tiRNAs), resulting in translation repression and inhibition of cell proliferation. tiRNas also prevent formation of apoptosome, thereby promoting cell survival. Preferentially cleaves RNAs between a pyrimidine and an adenosine residue, suggesting that it cleaves the anticodon loop of tRNA(Ala) (32-UUAGCAU-38) after positions 33 and 36. Cleaves a subset of tRNAs, including tRNA(Ala), tRNA(Glu), tRNA(Gly), tRNA(Lys), tRNA(Val), tRNA(His), tRNA(Asp) and tRNA(Sec). Under growth conditions and in differentiated cells, translocates to the nucleus and stimulates ribosomal RNA (rRNA) transcription, including that containing the initiation site sequences of 45S rRNA, thereby promoting cell growth and proliferation. Angiogenin induces vascularization of normal and malignant tissues via its ability to promote rRNA transcription. Involved in hematopoietic stem and progenitor cell (HSPC) growth and survival by promoting rRNA transcription in growth conditions and inhibiting translation in response to stress, respectively. Mediates the crosstalk between myeloid and intestinal epithelial cells to protect the intestinal epithelial barrier integrity: secreted by myeloid cells and promotes intestinal epithelial cells proliferation and survival. Also mediates osteoclast-endothelial cell crosstalk in growing bone: produced by osteoclasts and protects the neighboring vascular cells against senescence by promoting rRNA transcription. This Mus musculus (Mouse) protein is Angiogenin.